Consider the following 594-residue polypeptide: Suppressor of hairless protein (594 aa).

A disordered region spans residues 20-87 (ETTVVNPNGS…QQQQQHQQQM (68 aa)). Residues 58-87 (QQQQQQLQVHHQQQQQQQQQQQQQQHQQQM) are compositionally biased toward low complexity. DNA-binding stretches follow at residues 131-141 (QKSYGNEKRFF), 239-244 (SKPSKK), and 266-271 (RLRSQT). The IPT/TIG domain occupies 429-519 (PIVNSLNLNG…YATGLTFTYT (91 aa)). Low complexity-rich tracts occupy residues 542–562 (NNNNNITSISNNNNSNNAGSP) and 569–580 (QQQQQQHQALPS). The interval 542 to 594 (NNNNNITSISNNNNSNNAGSPAAGGGLQQQQQQHQALPSISEVQWNSHGSGLS) is disordered. The segment covering 582–594 (SEVQWNSHGSGLS) has biased composition (polar residues).

It belongs to the Su(H) family. As to quaternary structure, interacts with activated cleaved Notch. Interacts with Hairless, this interaction preventing its DNA-binding activity. Interacts with insv (via BEN domain).

The protein resides in the nucleus. It localises to the cytoplasm. Functionally, transcriptional regulator that plays a central role in Notch signaling, a signaling pathway involved in cell-cell communication that regulates a broad spectrum of cell-fate determinations. Binds directly the 5'-GTGRGAR-3' DNA consensus sequence, which is present in the regulatory region of several genes. Acts as a transcriptional repressor when it is not associated with Notch proteins. When associated with some Notch protein, it acts as a transcriptional activator that activates transcription of Notch target genes. Required for transcription of Sim. Specifically binds to the immunoglobulin kappa-type J segment recombination signal sequence. Required for neurogenesis in imaginal disks. In the larval brain, might play a role as a transducer of Notch signaling during type II neuroblast development. Also functions independently of the Notch pathway, in the development of the bristle sensory organ precursor cell. This Drosophila melanogaster (Fruit fly) protein is Suppressor of hairless protein (Su(H)).